We begin with the raw amino-acid sequence, 150 residues long: Large ribosomal subunit protein bL9 (150 aa).

The protein belongs to the bacterial ribosomal protein bL9 family.

Its function is as follows. Binds to the 23S rRNA. The chain is Large ribosomal subunit protein bL9 from Wigglesworthia glossinidia brevipalpis.